The primary structure comprises 172 residues: Iron-sulfur cluster assembly protein SufA (172 aa).

Positions 1–19 are cleaved as a signal peptide; sequence MFINIFLFLFAATINISSS. Positions 96, 164, and 166 each coordinate [4Fe-4S] cluster.

This sequence belongs to the HesB/IscA family. As to quaternary structure, homodimer.

Its subcellular location is the plastid. It is found in the apicoplast. It functions in the pathway cofactor biosynthesis; iron-sulfur cluster biosynthesis. Its function is as follows. Participates in the sulfur mobilization (SUF) pathway for iron-sulfur (Fe-S) cluster biogenesis. Involved in the pre-assembly of [4Fe-4S] clusters and their transfer to target proteins. The protein is Iron-sulfur cluster assembly protein SufA of Plasmodium berghei (strain Anka).